Reading from the N-terminus, the 920-residue chain is Coatomer subunit beta'-1 (920 aa).

WD repeat units follow at residues Gln13–Ser52, Val55–Val94, Ala97–Gln136, Gly140–Thr180, Ala183–Thr224, Gly227–Thr266, Thr350–Leu392, and Arg460–Asp500. Residues Leu850 to Glu920 form a disordered region. Over residues Asp854–Gln875 the composition is skewed to acidic residues.

The protein belongs to the WD repeat COPB2 family. As to quaternary structure, oligomeric complex that consists of at least the alpha, beta, beta', gamma, delta, epsilon and zeta subunits.

Its subcellular location is the cytoplasm. The protein resides in the golgi apparatus membrane. It localises to the cytoplasmic vesicle. The protein localises to the COPI-coated vesicle membrane. Functionally, the coatomer is a cytosolic protein complex that binds to dilysine motifs and reversibly associates with Golgi non-clathrin-coated vesicles, which further mediate biosynthetic protein transport from the ER, via the Golgi up to the trans Golgi network. Coatomer complex is required for budding from Golgi membranes, and is essential for the retrograde Golgi-to-ER transport of dilysine-tagged proteins. The chain is Coatomer subunit beta'-1 from Arabidopsis thaliana (Mouse-ear cress).